We begin with the raw amino-acid sequence, 162 residues long: Protein S40-4 (162 aa).

This sequence belongs to the senescence regulator S40 family.

Its subcellular location is the cytoplasm. This is Protein S40-4 from Arabidopsis thaliana (Mouse-ear cress).